The chain runs to 268 residues: Probable membrane transporter protein HI_0806 (268 aa).

8 helical membrane-spanning segments follow: residues isoleucine 6–glycine 26, valine 46–phenylalanine 66, isoleucine 79–phenylalanine 99, threonine 101–leucine 121, glycine 147–valine 167, isoleucine 178–leucine 198, leucine 212–phenylalanine 232, and leucine 248–histidine 268.

This sequence belongs to the 4-toluene sulfonate uptake permease (TSUP) (TC 2.A.102) family.

Its subcellular location is the cell membrane. This Haemophilus influenzae (strain ATCC 51907 / DSM 11121 / KW20 / Rd) protein is Probable membrane transporter protein HI_0806.